The chain runs to 221 residues: Serine/arginine-rich splicing factor 2 (221 aa).

The RRM domain occupies 14–92 (TSLKVDNLTY…RELRVQMARY (79 aa)). A disordered region spans residues 91–221 (RYGRPPDSHH…SPEEEGAVSS (131 aa)). Composition is skewed to basic residues over residues 117 to 171 (RRSR…RSKS) and 179 to 189 (SRSRSRSRSRS).

This sequence belongs to the splicing factor SR family. In terms of processing, extensively phosphorylated on serine residues in the RS domain.

The protein localises to the nucleus. Its function is as follows. Necessary for the splicing of pre-mRNA. It is required for formation of the earliest ATP-dependent splicing complex and interacts with spliceosomal components bound to both the 5'- and 3'-splice sites during spliceosome assembly. It also is required for ATP-dependent interactions of both U1 and U2 snRNPs with pre-mRNA. This Gallus gallus (Chicken) protein is Serine/arginine-rich splicing factor 2 (SRSF2).